The primary structure comprises 108 residues: Nucleoid-associated protein PLES_37951 (108 aa).

2 disordered regions span residues 1–25 (MMKG…KMQE) and 87–108 (NQEK…KMPF). The segment covering 87 to 98 (NQEKMSGFTSGM) has biased composition (polar residues).

Belongs to the YbaB/EbfC family. In terms of assembly, homodimer.

The protein resides in the cytoplasm. Its subcellular location is the nucleoid. Its function is as follows. Binds to DNA and alters its conformation. May be involved in regulation of gene expression, nucleoid organization and DNA protection. In Pseudomonas aeruginosa (strain LESB58), this protein is Nucleoid-associated protein PLES_37951.